The sequence spans 137 residues: Nuclear transition protein 2 (137 aa).

Residues 1–21 (MDTKTQSLPNAHTQPHSNSGP) are compositionally biased toward polar residues. The segment at 1–137 (MDTKTQSLPN…KRRSSGRKYN (137 aa)) is disordered. Positions 12, 16, 24, 29, 31, 35, and 38 each coordinate Zn(2+). The span at 22–74 (QSHACNQCSCSHHCQNCSQSCDRSQSCSRSRSSSQSPTGHRSLPGHQSQSLSP) shows a compositional bias: low complexity. Basic residues predominate over residues 78 to 91 (PRHRKRAMHSHRCP). The Nuclear localization signal signature appears at 110 to 118 (GKANKRKGI). Residues 126–137 (KTKRRSSGRKYN) show a composition bias toward basic residues. Serine 132 carries the phosphoserine modification.

This sequence belongs to the nuclear transition protein 2 family. In terms of tissue distribution, testis. Expression is restricted to haploid germ cells.

The protein resides in the nucleus. The protein localises to the nucleolus. Its subcellular location is the chromosome. Functionally, plays a key role in the replacement of histones to protamine in the elongating spermatids of mammals. In condensing spermatids, loaded onto the nucleosomes, where it promotes the recruitment and processing of protamines, which are responsible for histone eviction. The polypeptide is Nuclear transition protein 2 (TNP2) (Sus scrofa (Pig)).